A 597-amino-acid chain; its full sequence is Probable methyltransferase-like protein 25 (597 aa).

A compositionally biased stretch (basic and acidic residues) spans 245–254 (ECKGDAESVQ). Disordered regions lie at residues 245-265 (ECKGDAESVQRSRLGNPDLSA) and 317-342 (TSSQVQNTEKSGLRKERRNTASKARD). Residues 317–326 (TSSQVQNTEK) show a composition bias toward polar residues.

Its function is as follows. Probable methyltransferase. The polypeptide is Probable methyltransferase-like protein 25 (Mettl25) (Mus musculus (Mouse)).